We begin with the raw amino-acid sequence, 205 residues long: Small ribosomal subunit protein uS3 (205 aa).

A KH type-2 domain is found at 12-80; the sequence is VRQFLAKELA…PAQINIAEVR (69 aa).

The protein belongs to the universal ribosomal protein uS3 family. Part of the 30S ribosomal subunit. Forms a tight complex with proteins S10 and S14.

Its function is as follows. Binds the lower part of the 30S subunit head. Binds mRNA in the 70S ribosome, positioning it for translation. This Buchnera aphidicola subsp. Acyrthosiphon kondoi (Acyrthosiphon kondoi symbiotic bacterium) protein is Small ribosomal subunit protein uS3.